We begin with the raw amino-acid sequence, 91 residues long: Large ribosomal subunit protein eL43 (91 aa).

The segment at 39–60 (CSFCGKDAVRRSSVGIWKCNGC) adopts a C4-type zinc-finger fold.

It belongs to the eukaryotic ribosomal protein eL43 family.

This Dictyostelium discoideum (Social amoeba) protein is Large ribosomal subunit protein eL43 (rpl37A).